We begin with the raw amino-acid sequence, 373 residues long: MTDNSKIRVVVGMSGGVDSSVTALLLKEQGYDVIGVFMKNWDDTDEFGVCTATEDYKDVAAVADKIGIPYYSVNFEKEYWDRVFEYFLAEYRAGRTPNPDVMCNKEIKFKAFLDYAMTLGADYVATGHYAQVKRDENGTVHMLRGADNGKDQTYFLSQLSQEQLQKTLFPLGHLQKSEVREIAERAGLATAKKKDSTGICFIGEKNFKQFLSQYLPAQKGRMMTIDGRDMGEHAGLMYYTIGQRGGLGIGGQHGGDNQPWFVVGKDLSQNILYVGQGFYHEALMSNSLDASVIHFTREMPEEFTFECTAKFRYRQPDSHVAVHVRGDKAEVVFAEPQRAITPGQAVVFYDGKECLGGGMIDMAYKNGQPCQYI.

ATP is bound by residues 12 to 19 and Met-38; that span reads GMSGGVDS. Residues 98–100 are interaction with target base in tRNA; sequence NPD. Residue Cys-103 is the Nucleophile of the active site. An intrachain disulfide couples Cys-103 to Cys-200. Gly-127 contacts ATP. The interval 150–152 is interaction with tRNA; it reads KDQ. Catalysis depends on Cys-200, which acts as the Cysteine persulfide intermediate. Positions 312 to 313 are interaction with tRNA; the sequence is RY.

The protein belongs to the MnmA/TRMU family.

The protein localises to the cytoplasm. The enzyme catalyses S-sulfanyl-L-cysteinyl-[protein] + uridine(34) in tRNA + AH2 + ATP = 2-thiouridine(34) in tRNA + L-cysteinyl-[protein] + A + AMP + diphosphate + H(+). Its function is as follows. Catalyzes the 2-thiolation of uridine at the wobble position (U34) of tRNA, leading to the formation of s(2)U34. The chain is tRNA-specific 2-thiouridylase MnmA from Streptococcus pyogenes serotype M1.